The primary structure comprises 295 residues: Diaminopimelate epimerase (295 aa).

Positions 13, 46, and 66 each coordinate substrate. Cys75 (proton donor) is an active-site residue. Substrate contacts are provided by residues 76–77 (GN), Asn162, Asn195, and 213–214 (ER). Cys222 (proton acceptor) is an active-site residue. 223 to 224 (GT) provides a ligand contact to substrate.

It belongs to the diaminopimelate epimerase family. As to quaternary structure, homodimer.

It localises to the cytoplasm. It carries out the reaction (2S,6S)-2,6-diaminopimelate = meso-2,6-diaminopimelate. The protein operates within amino-acid biosynthesis; L-lysine biosynthesis via DAP pathway; DL-2,6-diaminopimelate from LL-2,6-diaminopimelate: step 1/1. In terms of biological role, catalyzes the stereoinversion of LL-2,6-diaminopimelate (L,L-DAP) to meso-diaminopimelate (meso-DAP), a precursor of L-lysine and an essential component of the bacterial peptidoglycan. The protein is Diaminopimelate epimerase of Psychrobacter arcticus (strain DSM 17307 / VKM B-2377 / 273-4).